Consider the following 152-residue polypeptide: 3-hydroxyacyl-[acyl-carrier-protein] dehydratase FabZ (152 aa).

Histidine 57 is a catalytic residue.

This sequence belongs to the thioester dehydratase family. FabZ subfamily.

The protein localises to the cytoplasm. It carries out the reaction a (3R)-hydroxyacyl-[ACP] = a (2E)-enoyl-[ACP] + H2O. Functionally, involved in unsaturated fatty acids biosynthesis. Catalyzes the dehydration of short chain beta-hydroxyacyl-ACPs and long chain saturated and unsaturated beta-hydroxyacyl-ACPs. In Bradyrhizobium sp. (strain ORS 278), this protein is 3-hydroxyacyl-[acyl-carrier-protein] dehydratase FabZ.